Consider the following 1050-residue polypeptide: Mitotic checkpoint serine/threonine-protein kinase BUB1 beta (1050 aa).

A BUB1 N-terminal domain is found at 62-226; that stretch reads FEYEIRFYTG…FESSVPQRST (165 aa). The Nuclear localization signal signature appears at 111–118; it reads GEKRYYSD. The interval 152–185 is necessary for interaction with KNL1; it reads AQFYISWAEEYEARENFRKADAIFQEGIQQKAEP. The D-box motif lies at 224–232; sequence RSTLAELKS. Position 250 is an N6-acetyllysine; by PCAF (lysine 250). Serine 367 carries the post-translational modification Phosphoserine. A disordered region spans residues 368-393; it reads TRKPGKEEGDPLQRVQSHQQASEEKK. Residue serine 435 is modified to Phosphoserine. The segment at 456–480 is disordered; it reads IQTTQQERTGDQQEETMPTKETTKL. 3 positions are modified to phosphoserine: serine 543, serine 665, and serine 670. Serine 676 is subject to Phosphoserine; by PLK1. Serine 697 is modified (phosphoserine). Residues 766–1050 enclose the Protein kinase domain; the sequence is YCIKREYLIC…LTSPGALLFQ (285 aa). ATP is bound at residue 772–780; sequence YLICEDYKL. Threonine 792 carries the phosphothreonine; by PLK1 modification. Lysine 795 lines the ATP pocket. Aspartate 882 acts as the Proton acceptor in catalysis. Threonine 1008 carries the phosphothreonine; by PLK1 modification. At threonine 1042 the chain carries Phosphothreonine. At serine 1043 the chain carries Phosphoserine.

The protein belongs to the protein kinase superfamily. Ser/Thr protein kinase family. BUB1 subfamily. In terms of assembly, interacts with CENPE. Interacts with PLK1. Part of a complex containing BUB3, CDC20 and BUB1B. Interacts with anaphase-promoting complex/cyclosome (APC/C). Interacts with KNL1. Interacts with KAT2B. Interacts with RIPK3. Interacts with the closed conformation form of MAD2L1. In terms of processing, proteolytically cleaved by caspase-3 in a cell cycle specific manner. The cleavage might be involved in the durability of the cell cycle delay. Caspase-3 cleavage is associated with abrogation of the mitotic checkpoint. The major site of cleavage is at Asp-610. Post-translationally, acetylation at Lys-250 regulates its degradation and timing in anaphase entry. Ubiquitinated. Degraded by the proteasome. Ubiquitinated by UBR5, promoting disassembly of the mitotic checkpoint complex from the APC/C complex. In terms of processing, sumoylated with SUMO2 and SUMO3. The sumoylation mediates the association with CENPE at the kinetochore. Post-translationally, autophosphorylated in vitro. Intramolecular autophosphorylation is stimulated by CENPE. Phosphorylated during mitosis and hyperphosphorylated in mitotically arrested cells. Phosphorylation at Ser-670 and Ser-1043 occurs at kinetochores upon mitotic entry with dephosphorylation at the onset of anaphase. Highly expressed in thymus followed by spleen. Preferentially expressed in tissues with a high mitotic index.

It localises to the cytoplasm. The protein localises to the nucleus. Its subcellular location is the chromosome. The protein resides in the centromere. It is found in the kinetochore. It localises to the cytoskeleton. The protein localises to the microtubule organizing center. Its subcellular location is the centrosome. It carries out the reaction L-seryl-[protein] + ATP = O-phospho-L-seryl-[protein] + ADP + H(+). It catalyses the reaction L-threonyl-[protein] + ATP = O-phospho-L-threonyl-[protein] + ADP + H(+). Its activity is regulated as follows. Kinase activity stimulated by CENPE. In terms of biological role, essential component of the mitotic checkpoint. Required for normal mitosis progression. The mitotic checkpoint delays anaphase until all chromosomes are properly attached to the mitotic spindle. One of its checkpoint functions is to inhibit the activity of the anaphase-promoting complex/cyclosome (APC/C) by blocking the binding of CDC20 to APC/C, independently of its kinase activity. The other is to monitor kinetochore activities that depend on the kinetochore motor CENPE. Required for kinetochore localization of CENPE. Negatively regulates PLK1 activity in interphase cells and suppresses centrosome amplification. Also implicated in triggering apoptosis in polyploid cells that exit aberrantly from mitotic arrest. May play a role for tumor suppression. In Homo sapiens (Human), this protein is Mitotic checkpoint serine/threonine-protein kinase BUB1 beta (BUB1B).